The chain runs to 416 residues: Gamma-glutamyl phosphate reductase (416 aa).

Belongs to the gamma-glutamyl phosphate reductase family.

The protein localises to the cytoplasm. It carries out the reaction L-glutamate 5-semialdehyde + phosphate + NADP(+) = L-glutamyl 5-phosphate + NADPH + H(+). Its pathway is amino-acid biosynthesis; L-proline biosynthesis; L-glutamate 5-semialdehyde from L-glutamate: step 2/2. Catalyzes the NADPH-dependent reduction of L-glutamate 5-phosphate into L-glutamate 5-semialdehyde and phosphate. The product spontaneously undergoes cyclization to form 1-pyrroline-5-carboxylate. The polypeptide is Gamma-glutamyl phosphate reductase (Salmonella agona (strain SL483)).